We begin with the raw amino-acid sequence, 183 residues long: Calmodulin-like protein 3 (183 aa).

4 consecutive EF-hand domains span residues 7 to 42 (EQIAEFREAFNLFDKDGDGTITSKELGTVMGSLGQS), 43 to 78 (PTEAELKKMVEEVDADGSGSIEFEEFLGLLARKLRD), 80 to 115 (GAEDDIRDAFRVFDKDQNGFITPDELRHVMANLSDP), and 116 to 151 (LSDDELADMLHEADSDGDGQINYNEFLKVMMAKRRQ). Residues Asp20, Asp22, Asp24, Thr26, Glu31, Asp56, Asp58, Ser60, Ser62, Glu67, Asp93, Asp95, Asn97, Glu104, Asp129, Asp131, Asp133, Gln135, and Glu140 each contribute to the Ca(2+) site. Residues 154-183 (MEGHGSGGHRSSNSHKKSGCCGPNSSCTIL) form a disordered region. S-palmitoyl cysteine attachment occurs at residues Cys173 and Cys174. Cys180 is modified (cysteine methyl ester). A lipid anchor (S-farnesyl cysteine) is attached at Cys180. The propeptide at 181 to 183 (TIL) is removed in mature form.

The protein belongs to the calmodulin family.

The protein resides in the membrane. Its function is as follows. Potential calcium sensor. The polypeptide is Calmodulin-like protein 3 (CML3) (Oryza sativa subsp. japonica (Rice)).